The sequence spans 138 residues: DNA-directed RNA polymerase subunit omega (138 aa).

Positions 101 to 138 are disordered; it reads AEDDDTLEADGLTIHDGADSDLDLSDDAGQDTDEADED. Residues 119–138 show a composition bias toward acidic residues; that stretch reads DSDLDLSDDAGQDTDEADED.

It belongs to the RNA polymerase subunit omega family. As to quaternary structure, the RNAP catalytic core consists of 2 alpha, 1 beta, 1 beta' and 1 omega subunit. When a sigma factor is associated with the core the holoenzyme is formed, which can initiate transcription.

It carries out the reaction RNA(n) + a ribonucleoside 5'-triphosphate = RNA(n+1) + diphosphate. Functionally, promotes RNA polymerase assembly. Latches the N- and C-terminal regions of the beta' subunit thereby facilitating its interaction with the beta and alpha subunits. In Rhodospirillum rubrum (strain ATCC 11170 / ATH 1.1.1 / DSM 467 / LMG 4362 / NCIMB 8255 / S1), this protein is DNA-directed RNA polymerase subunit omega.